The chain runs to 632 residues: tRNA uridine 5-carboxymethylaminomethyl modification enzyme MnmG (632 aa).

Residues 15 to 20, I127, and S182 contribute to the FAD site; that span reads GAGHAG. 276-290 is an NAD(+) binding site; it reads GPRYCPSIEDKIVRF. Q373 lines the FAD pocket.

It belongs to the MnmG family. As to quaternary structure, homodimer. Heterotetramer of two MnmE and two MnmG subunits. FAD is required as a cofactor.

It localises to the cytoplasm. In terms of biological role, NAD-binding protein involved in the addition of a carboxymethylaminomethyl (cmnm) group at the wobble position (U34) of certain tRNAs, forming tRNA-cmnm(5)s(2)U34. In Streptococcus pyogenes serotype M18 (strain MGAS8232), this protein is tRNA uridine 5-carboxymethylaminomethyl modification enzyme MnmG.